Consider the following 127-residue polypeptide: Large ribosomal subunit protein bL17 (127 aa).

The protein belongs to the bacterial ribosomal protein bL17 family. Part of the 50S ribosomal subunit. Contacts protein L32.

The sequence is that of Large ribosomal subunit protein bL17 from Lactobacillus johnsonii (strain CNCM I-12250 / La1 / NCC 533).